The primary structure comprises 175 residues: ATP synthase subunit b, chloroplastic (175 aa).

Residues 26–44 (VINLAVVIGVVVSFVGDAV) traverse the membrane as a helical segment.

The protein belongs to the ATPase B chain family. F-type ATPases have 2 components, F(1) - the catalytic core - and F(0) - the membrane proton channel. F(1) has five subunits: alpha(3), beta(3), gamma(1), delta(1), epsilon(1). F(0) has four main subunits: a(1), b(1), b'(1) and c(10-14). The alpha and beta chains form an alternating ring which encloses part of the gamma chain. F(1) is attached to F(0) by a central stalk formed by the gamma and epsilon chains, while a peripheral stalk is formed by the delta, b and b' chains.

It is found in the plastid. Its subcellular location is the chloroplast thylakoid membrane. Functionally, f(1)F(0) ATP synthase produces ATP from ADP in the presence of a proton or sodium gradient. F-type ATPases consist of two structural domains, F(1) containing the extramembraneous catalytic core and F(0) containing the membrane proton channel, linked together by a central stalk and a peripheral stalk. During catalysis, ATP synthesis in the catalytic domain of F(1) is coupled via a rotary mechanism of the central stalk subunits to proton translocation. In terms of biological role, component of the F(0) channel, it forms part of the peripheral stalk, linking F(1) to F(0). This is ATP synthase subunit b, chloroplastic from Tupiella akineta (Green alga).